Reading from the N-terminus, the 164-residue chain is Protein CURVATURE THYLAKOID 1A, chloroplastic (164 aa).

Residues M1–R62 constitute a chloroplast transit peptide. Position 63 is an N-acetylalanine (A63). Topologically, residues A63 to V93 are stromal. The chain crosses the membrane as a helical span at residues L94–I114. The Lumenal segment spans residues N115–S116. A helical membrane pass occupies residues V117–Y137. Topologically, residues R138 to E164 are stromal. Positions L140 to E164 form a coiled coil.

The protein belongs to the CURT family. Homo- and heterodimers and trimers.

The protein localises to the plastid. The protein resides in the chloroplast. Its subcellular location is the plastoglobule. It is found in the membrane. It localises to the chloroplast thylakoid membrane. Determines thylakoid architecture by inducing membrane curvature. This chain is Protein CURVATURE THYLAKOID 1A, chloroplastic (CURT1A), found in Arabidopsis thaliana (Mouse-ear cress).